Here is a 558-residue protein sequence, read N- to C-terminus: Proline--tRNA ligase (558 aa).

It belongs to the class-II aminoacyl-tRNA synthetase family. ProS type 1 subfamily. Homodimer.

The protein resides in the cytoplasm. It carries out the reaction tRNA(Pro) + L-proline + ATP = L-prolyl-tRNA(Pro) + AMP + diphosphate. In terms of biological role, catalyzes the attachment of proline to tRNA(Pro) in a two-step reaction: proline is first activated by ATP to form Pro-AMP and then transferred to the acceptor end of tRNA(Pro). As ProRS can inadvertently accommodate and process non-cognate amino acids such as alanine and cysteine, to avoid such errors it has two additional distinct editing activities against alanine. One activity is designated as 'pretransfer' editing and involves the tRNA(Pro)-independent hydrolysis of activated Ala-AMP. The other activity is designated 'posttransfer' editing and involves deacylation of mischarged Ala-tRNA(Pro). The misacylated Cys-tRNA(Pro) is not edited by ProRS. The sequence is that of Proline--tRNA ligase from Coprothermobacter proteolyticus (strain ATCC 35245 / DSM 5265 / OCM 4 / BT).